The following is a 217-amino-acid chain: Kunitz-type trypsin inhibitor-like 1 protein (217 aa).

The signal sequence occupies residues 1-26 (MKPLSPLTLSFFLFVFITNLSLAFSN). Intrachain disulfides connect C70–C115 and C168–C175. N-linked (GlcNAc...) asparagine glycosylation occurs at N191.

It belongs to the protease inhibitor I3 (leguminous Kunitz-type inhibitor) family. As to expression, expressed in roots, leaves, epidermal layers of elongating stems, meristems and in the vascular system.

It is found in the secreted. Functionally, might act as a protease inhibitor involved in plant defense responses. This chain is Kunitz-type trypsin inhibitor-like 1 protein (PIP20-1), found in Pisum sativum (Garden pea).